Here is a 213-residue protein sequence, read N- to C-terminus: Pyrrolidone-carboxylate peptidase (213 aa).

Active-site residues include E78, C141, and H165.

It belongs to the peptidase C15 family. Homotetramer.

The protein localises to the cytoplasm. The catalysed reaction is Release of an N-terminal pyroglutamyl group from a polypeptide, the second amino acid generally not being Pro.. Removes 5-oxoproline from various penultimate amino acid residues except L-proline. This is Pyrrolidone-carboxylate peptidase from Staphylococcus saprophyticus subsp. saprophyticus (strain ATCC 15305 / DSM 20229 / NCIMB 8711 / NCTC 7292 / S-41).